The following is a 649-amino-acid chain: Stress-70 protein, mitochondrial (649 aa).

Residues 1–46 (MISASRAAAARLVGAAASRGPTAARHKDGWNGLSHEAFRIVSRRDY) constitute a mitochondrion transit peptide. The segment at 1–432 (MISASRAAAA…IQGGVLAGDV (432 aa)) is interaction with NFS1. Positions 63 and 64 each coordinate ADP. A nucleotide-binding domain (NBD) region spans residues 63–431 (TNSCVAVMEG…AIQGGVLAGD (369 aa)). At Lys-76 the chain carries N6-acetyllysine. Thr-87 is modified (phosphothreonine). Residues Lys-135 and Lys-138 each carry the N6-acetyllysine; alternate modification. An N6-succinyllysine; alternate mark is found at Lys-135 and Lys-138. Lys-143 bears the N6-acetyllysine mark. Lys-206 is modified (N6-acetyllysine; alternate). N6-succinyllysine; alternate is present on Lys-206. N6-malonyllysine; alternate is present on Lys-206. N6-acetyllysine is present on residues Lys-234 and Lys-288. Lys-300 carries the N6-acetyllysine; alternate modification. Lys-300 bears the N6-succinyllysine; alternate mark. 3 residues coordinate ADP: Glu-313, Lys-316, and Ser-320. Lys-368 is subject to N6-succinyllysine. 2 residues coordinate ADP: Gly-388 and Arg-391. At Lys-394 the chain carries N6-succinyllysine. Ser-408 is modified (phosphoserine). The interdomain linker stretch occupies residues 432-441 (VTDVLLLDVT). 3 positions are modified to N6-acetyllysine; alternate: Lys-565, Lys-598, and Lys-638. Lys-565, Lys-598, and Lys-638 each carry N6-succinyllysine; alternate.

The protein belongs to the heat shock protein 70 family. As to quaternary structure, interacts strongly with the intermediate form of FXN and weakly with its mature form. Interacts with HSCB. Associates with the mitochondrial contact site and cristae organizing system (MICOS) complex, composed of at least MICOS10/MIC10, CHCHD3/MIC19, CHCHD6/MIC25, APOOL/MIC27, IMMT/MIC60, APOO/MIC23/MIC26 and QIL1/MIC13. This complex was also known under the names MINOS or MitOS complex. The MICOS complex associates with mitochondrial outer membrane proteins SAMM50, MTX1, MTX2 and DNAJC11, mitochondrial inner membrane protein TMEM11 and with HSPA9. Interacts with DNLZ, the interaction is required to prevent self-aggregation. Interacts with TESPA1. Interacts with PDPN. Interacts with NFU1, NFS1 and ISCU. Interacts with TP53; the interaction promotes TP53 degradation. Interacts (via SBD domain) with UBXN2A; the interaction with UBXN2A inhibits HSPA9/MOT-2 interaction with and degradation of TP53, thereby promotes TP53 translocation to the nucleus. Interacts with ITPR1 AND VDAC1; this interaction couples ITPR1 to VDAC1. Component of the TIM23 mitochondrial inner membrane pre-sequence translocase complex.

It is found in the mitochondrion. It localises to the nucleus. Its subcellular location is the nucleolus. The protein resides in the cytoplasm. The protein localises to the mitochondrion matrix. It catalyses the reaction ATP + H2O = ADP + phosphate + H(+). The chaperone activity is regulated by ATP-induced allosteric coupling of the nucleotide-binding (NBD) and substrate-binding (SBD) domains. ATP binding in the NBD leads to a conformational change in the NBD, which is transferred through the interdomain linker (IDL) to the substrate-binding domain (SBD). This elicits a reduced substrate affinity and a faster substrate exchange rate. Upon hydrolysis of ATP to ADP, the protein undergoes a conformational change that increases its affinity for substrate proteins. It cycles through repeated phases of ATP hydrolysis and nucleotide exchange, facilitating repeated cycles of substrate binding and release. Functions in collaboration with co-chaperones. Functions with the co-chaperone, DNLZ, to maintain solubility and regulate ATP hydrolysis. Nucleotide exchange factors, GRPEL1 and GRPEL2, accelerate nucleotide exchange. Mitochondrial chaperone that plays a key role in mitochondrial protein import, folding, and assembly. Plays an essential role in the protein quality control system, the correct folding of proteins, the re-folding of misfolded proteins, and the targeting of proteins for subsequent degradation. These processes are achieved through cycles of ATP binding, ATP hydrolysis, and ADP release, mediated by co-chaperones. In mitochondria, it associates with the TIM (translocase of the inner membrane) protein complex to assist in the import and folding of mitochondrial proteins. Plays an important role in mitochondrial iron-sulfur cluster (ISC) biogenesis, interacts with and stabilizes ISC cluster assembly proteins FXN, NFU1, NFS1 and ISCU. Regulates erythropoiesis via stabilization of ISC assembly. Regulates mitochondrial calcium-dependent apoptosis by coupling two calcium channels, ITPR1 and VDAC1, at the mitochondria-associated endoplasmic reticulum (ER) membrane to facilitate calcium transport from the ER lumen to the mitochondria intermembrane space, providing calcium for the downstream calcium channel MCU, which releases it into the mitochondrial matrix. Although primarily located in the mitochondria, it is also found in other cellular compartments. In the cytosol, it associates with proteins involved in signaling, apoptosis, or senescence. It may play a role in cell cycle regulation via its interaction with and promotion of degradation of TP53. May play a role in the control of cell proliferation and cellular aging. Protects against reactive oxygen species (ROS). Extracellular HSPA9 plays a cytoprotective role by preventing cell lysis following immune attack by the membrane attack complex by disrupting formation of the complex. The polypeptide is Stress-70 protein, mitochondrial (Canis lupus familiaris (Dog)).